We begin with the raw amino-acid sequence, 101 residues long: Phosphoribosyl-AMP cyclohydrolase (101 aa).

Asp-71 is a binding site for Mg(2+). Residue Cys-72 participates in Zn(2+) binding. Mg(2+) is bound by residues Asp-73 and Asp-75. Residues Cys-88 and Cys-95 each coordinate Zn(2+).

Belongs to the PRA-CH family. In terms of assembly, homodimer. Mg(2+) is required as a cofactor. Zn(2+) serves as cofactor.

The protein resides in the cytoplasm. It catalyses the reaction 1-(5-phospho-beta-D-ribosyl)-5'-AMP + H2O = 1-(5-phospho-beta-D-ribosyl)-5-[(5-phospho-beta-D-ribosylamino)methylideneamino]imidazole-4-carboxamide. Its pathway is amino-acid biosynthesis; L-histidine biosynthesis; L-histidine from 5-phospho-alpha-D-ribose 1-diphosphate: step 3/9. In terms of biological role, catalyzes the hydrolysis of the adenine ring of phosphoribosyl-AMP. The sequence is that of Phosphoribosyl-AMP cyclohydrolase from Bacillus cereus (strain 03BB102).